Reading from the N-terminus, the 476-residue chain is Aspartyl/glutamyl-tRNA(Asn/Gln) amidotransferase subunit B (476 aa).

It belongs to the GatB/GatE family. GatB subfamily. As to quaternary structure, heterotrimer of A, B and C subunits.

The catalysed reaction is L-glutamyl-tRNA(Gln) + L-glutamine + ATP + H2O = L-glutaminyl-tRNA(Gln) + L-glutamate + ADP + phosphate + H(+). It catalyses the reaction L-aspartyl-tRNA(Asn) + L-glutamine + ATP + H2O = L-asparaginyl-tRNA(Asn) + L-glutamate + ADP + phosphate + 2 H(+). Allows the formation of correctly charged Asn-tRNA(Asn) or Gln-tRNA(Gln) through the transamidation of misacylated Asp-tRNA(Asn) or Glu-tRNA(Gln) in organisms which lack either or both of asparaginyl-tRNA or glutaminyl-tRNA synthetases. The reaction takes place in the presence of glutamine and ATP through an activated phospho-Asp-tRNA(Asn) or phospho-Glu-tRNA(Gln). The polypeptide is Aspartyl/glutamyl-tRNA(Asn/Gln) amidotransferase subunit B (Lactobacillus delbrueckii subsp. bulgaricus (strain ATCC 11842 / DSM 20081 / BCRC 10696 / JCM 1002 / NBRC 13953 / NCIMB 11778 / NCTC 12712 / WDCM 00102 / Lb 14)).